Consider the following 540-residue polypeptide: Membrane protein insertase YidC (540 aa).

A run of 5 helical transmembrane segments spans residues 1–21, 351–371, 418–438, 464–484, and 497–517; these read MVVQ…MMLD, NWGI…FPLT, LGGC…YYML, ILPI…PSSI, and PLIF…YYII.

The protein belongs to the OXA1/ALB3/YidC family. Type 1 subfamily. In terms of assembly, interacts with the Sec translocase complex via SecD. Specifically interacts with transmembrane segments of nascent integral membrane proteins during membrane integration.

Its subcellular location is the cell membrane. In terms of biological role, required for the insertion and/or proper folding and/or complex formation of integral membrane proteins into the membrane. Involved in integration of membrane proteins that insert both dependently and independently of the Sec translocase complex, as well as at least some lipoproteins. Aids folding of multispanning membrane proteins. The sequence is that of Membrane protein insertase YidC from Wigglesworthia glossinidia brevipalpis.